The chain runs to 75 residues: Mitotic-spindle organizing protein 1 (75 aa).

The protein belongs to the MOZART1 family. Part of the gamma-tubulin complex.

Its subcellular location is the cytoplasm. The protein resides in the cytoskeleton. It is found in the microtubule organizing center. It localises to the centrosome. The protein localises to the spindle. Functionally, required for gamma-tubulin complex recruitment to the centrosome. This is Mitotic-spindle organizing protein 1 (mzt1) from Danio rerio (Zebrafish).